Here is a 368-residue protein sequence, read N- to C-terminus: Quinolinate synthase (368 aa).

2 residues coordinate iminosuccinate: His46 and Ser63. Cys110 serves as a coordination point for [4Fe-4S] cluster. Iminosuccinate contacts are provided by residues 141-143 (YVN) and Ser162. Cys230 is a [4Fe-4S] cluster binding site. Iminosuccinate contacts are provided by residues 256 to 258 (HPE) and Thr273. Cys320 contacts [4Fe-4S] cluster.

It belongs to the quinolinate synthase family. Type 3 subfamily. It depends on [4Fe-4S] cluster as a cofactor.

The protein localises to the cytoplasm. It catalyses the reaction iminosuccinate + dihydroxyacetone phosphate = quinolinate + phosphate + 2 H2O + H(+). It functions in the pathway cofactor biosynthesis; NAD(+) biosynthesis; quinolinate from iminoaspartate: step 1/1. Functionally, catalyzes the condensation of iminoaspartate with dihydroxyacetone phosphate to form quinolinate. This is Quinolinate synthase from Bacillus cereus (strain ATCC 14579 / DSM 31 / CCUG 7414 / JCM 2152 / NBRC 15305 / NCIMB 9373 / NCTC 2599 / NRRL B-3711).